Consider the following 159-residue polypeptide: MAVLWRLSAVCGALGGRALLLRTPVVRPAHISAFLQDRPIPEWCGVQHIHLSPSHHSGSKAASLHWTSERVVSVLLLGLLPAAYLNPCSAMDYSLAAALTLHGHWGLGQVVTDYVHGDALQKAAKAGLLALSALTFAGLCYFNYHDVGICKAVAMLWKL.

The N-terminal 56 residues, 1-56 (MAVLWRLSAVCGALGGRALLLRTPVVRPAHISAFLQDRPIPEWCGVQHIHLSPSHH), are a transit peptide targeting the mitochondrion. Residues 57–63 (SGSKAAS) are Mitochondrial matrix-facing. A helical membrane pass occupies residues 64-85 (LHWTSERVVSVLLLGLLPAAYL). The Mitochondrial intermembrane segment spans residues 86–90 (NPCSA). The helical transmembrane segment at 91-111 (MDYSLAAALTLHGHWGLGQVV) threads the bilayer. A heme b-binding site is contributed by His102. The Mitochondrial matrix segment spans residues 112–122 (TDYVHGDALQK). Tyr114 is a binding site for a ubiquinone. A helical membrane pass occupies residues 123–144 (AAKAGLLALSALTFAGLCYFNY). At 145–159 (HDVGICKAVAMLWKL) the chain is on the mitochondrial intermembrane side.

It belongs to the CybS family. As to quaternary structure, component of complex II composed of four subunits: the flavoprotein (FP) SDHA, iron-sulfur protein (IP) SDHB, and a cytochrome b560 composed of SDHC and SDHD.

It is found in the mitochondrion inner membrane. It participates in carbohydrate metabolism; tricarboxylic acid cycle. In terms of biological role, membrane-anchoring subunit of succinate dehydrogenase (SDH) that is involved in complex II of the mitochondrial electron transport chain and is responsible for transferring electrons from succinate to ubiquinone (coenzyme Q). SDH also oxidizes malate to the non-canonical enol form of oxaloacetate, enol-oxaloacetate. Enol-oxaloacetate, which is a potent inhibitor of the succinate dehydrogenase activity, is further isomerized into keto-oxaloacetate. This chain is Succinate dehydrogenase [ubiquinone] cytochrome b small subunit, mitochondrial (SDHD), found in Homo sapiens (Human).